The sequence spans 692 residues: Mitogen-activated protein kinase kinase kinase 7-interacting protein 3 homolog (692 aa).

The CUE domain occupies 8 to 51 (LDIQVLNDLQQRFPEIPRDVVSQCMLQNNSNLDACYRALTQESC). Disordered stretches follow at residues 138 to 159 (NDQN…GVGT), 206 to 333 (YGTP…PYGP), and 349 to 427 (SQQR…VVMS). Composition is skewed to polar residues over residues 215–230 (PSQN…NTAW), 249–298 (QSFQ…QTSH), and 349–387 (SQQR…SGSP). Low complexity predominate over residues 409–422 (SQPPTTTGSPTPSS). Residues 496–580 (ALLLHQRARM…QKEIDLLQSR (85 aa)) are a coiled coil. The disordered stretch occupies residues 598-662 (SPGPAVPPNT…SPRPGRDEDF (65 aa)). The segment covering 608–620 (CKKESSETTSGER) has biased composition (basic and acidic residues). The segment at 662 to 692 (FEGSPWNCNSCTFLNHPALNRCEQCEMPRFT) adopts a RanBP2-type zinc-finger fold.

May play a role in signaling pathway. The chain is Mitogen-activated protein kinase kinase kinase 7-interacting protein 3 homolog (map3k7ip3) from Xenopus laevis (African clawed frog).